A 481-amino-acid chain; its full sequence is 3-isopropylmalate dehydratase large subunit (481 aa).

Positions 355, 415, and 418 each coordinate [4Fe-4S] cluster.

This sequence belongs to the aconitase/IPM isomerase family. LeuC type 1 subfamily. Heterodimer of LeuC and LeuD. [4Fe-4S] cluster serves as cofactor.

It catalyses the reaction (2R,3S)-3-isopropylmalate = (2S)-2-isopropylmalate. It functions in the pathway amino-acid biosynthesis; L-leucine biosynthesis; L-leucine from 3-methyl-2-oxobutanoate: step 2/4. Catalyzes the isomerization between 2-isopropylmalate and 3-isopropylmalate, via the formation of 2-isopropylmaleate. This is 3-isopropylmalate dehydratase large subunit from Symbiobacterium thermophilum (strain DSM 24528 / JCM 14929 / IAM 14863 / T).